Here is a 97-residue protein sequence, read N- to C-terminus: Co-chaperonin GroES (97 aa).

It belongs to the GroES chaperonin family. Heptamer of 7 subunits arranged in a ring. Interacts with the chaperonin GroEL.

The protein localises to the cytoplasm. Functionally, together with the chaperonin GroEL, plays an essential role in assisting protein folding. The GroEL-GroES system forms a nano-cage that allows encapsulation of the non-native substrate proteins and provides a physical environment optimized to promote and accelerate protein folding. GroES binds to the apical surface of the GroEL ring, thereby capping the opening of the GroEL channel. In Pseudomonas fluorescens (strain Pf0-1), this protein is Co-chaperonin GroES.